The following is a 334-amino-acid chain: Probable N5-carboxyaminoimidazole ribonucleotide mutase (334 aa).

Substrate-binding residues include Ser-11, Asp-14, and Arg-41.

It belongs to the AIR carboxylase family. Class I subfamily.

The catalysed reaction is 5-carboxyamino-1-(5-phospho-D-ribosyl)imidazole + H(+) = 5-amino-1-(5-phospho-D-ribosyl)imidazole-4-carboxylate. Its pathway is purine metabolism; IMP biosynthesis via de novo pathway; 5-amino-1-(5-phospho-D-ribosyl)imidazole-4-carboxylate from 5-amino-1-(5-phospho-D-ribosyl)imidazole (N5-CAIR route): step 2/2. Functionally, catalyzes the conversion of N5-carboxyaminoimidazole ribonucleotide (N5-CAIR) to 4-carboxy-5-aminoimidazole ribonucleotide (CAIR). The sequence is that of Probable N5-carboxyaminoimidazole ribonucleotide mutase from Methanothermobacter thermautotrophicus (strain ATCC 29096 / DSM 1053 / JCM 10044 / NBRC 100330 / Delta H) (Methanobacterium thermoautotrophicum).